Reading from the N-terminus, the 165-residue chain is Transcription factor TCP16 (165 aa).

The segment covering 1 to 11 has biased composition (polar residues); that stretch reads MDSKNGINNSQ. 2 disordered regions span residues 1-21 and 146-165; these read MDSK…KDRH and GNAT…TTTV. Positions 12–21 are enriched in basic residues; sequence KARRTPKDRH. Positions 17-71 constitute a TCP domain; the sequence is PKDRHLKIGGRDRRIRIPPSVAPQLFRLTKELGFKTDGETVSWLLQNAEPAIFAA. Low complexity predominate over residues 148 to 165; that stretch reads ATASDTTSAATTTATTTV.

As to expression, mostly in anther in young buds.

It is found in the nucleus. Its function is as follows. Required during early processes in pollen development. This is Transcription factor TCP16 (TCP16) from Arabidopsis thaliana (Mouse-ear cress).